The sequence spans 195 residues: MCFALSLSIYKHTGTPPNKCRLNSALKRNRATVRLDIGQRGSLCPPFSMSAVRPPVFIGLLLLILTTGYCKPRDRDETSLLELLMDRVRQTQEHHSEGNTQHPPQIIEHSLETKDVNKVTKSYQHERILEVFPRDLRQKDKFLKHLTGPLYFSPKCSKLFYKLYNNTRDCTIPAYYKRCARLLTRLAGSQRCTEG.

Disulfide bonds link cysteine 156–cysteine 192 and cysteine 170–cysteine 179.

Belongs to the ALKAL family. Homodimer. As to expression, highly expressed in the swim bladder and single cells of unknown identity in the head.

The protein localises to the secreted. It localises to the cell membrane. Its function is as follows. Cytokine that acts as a physiological ligand for receptor tyrosine kinases LTK and ALK. Required for neural crest cell differentiation and iridophore development during embryonic iridophore development and adult stripe development by acting as a receptor for LTK. Also required for iridophore formation in the adult eye. The chain is ALK and LTK ligand 2b from Danio rerio (Zebrafish).